The primary structure comprises 221 residues: Ribonuclease HII (221 aa).

Residues 29-220 form the RNase H type-2 domain; it reads RRVAGVDEVG…LRDLQAGEIG (192 aa). Positions 35, 36, and 129 each coordinate a divalent metal cation. Positions 198–221 are disordered; it reads LGPSPQHRRSFAPLRDLQAGEIGG.

This sequence belongs to the RNase HII family. It depends on Mn(2+) as a cofactor. Mg(2+) serves as cofactor.

The protein resides in the cytoplasm. The enzyme catalyses Endonucleolytic cleavage to 5'-phosphomonoester.. Its function is as follows. Endonuclease that specifically degrades the RNA of RNA-DNA hybrids. This chain is Ribonuclease HII, found in Synechococcus sp. (strain JA-3-3Ab) (Cyanobacteria bacterium Yellowstone A-Prime).